Reading from the N-terminus, the 263-residue chain is Acyl-[acyl-carrier-protein]--UDP-N-acetylglucosamine O-acyltransferase (263 aa).

The protein belongs to the transferase hexapeptide repeat family. LpxA subfamily. In terms of assembly, homotrimer.

Its subcellular location is the cytoplasm. The catalysed reaction is a (3R)-hydroxyacyl-[ACP] + UDP-N-acetyl-alpha-D-glucosamine = a UDP-3-O-[(3R)-3-hydroxyacyl]-N-acetyl-alpha-D-glucosamine + holo-[ACP]. Its pathway is glycolipid biosynthesis; lipid IV(A) biosynthesis; lipid IV(A) from (3R)-3-hydroxytetradecanoyl-[acyl-carrier-protein] and UDP-N-acetyl-alpha-D-glucosamine: step 1/6. Involved in the biosynthesis of lipid A, a phosphorylated glycolipid that anchors the lipopolysaccharide to the outer membrane of the cell. The chain is Acyl-[acyl-carrier-protein]--UDP-N-acetylglucosamine O-acyltransferase from Campylobacter jejuni subsp. jejuni serotype O:23/36 (strain 81-176).